A 515-amino-acid chain; its full sequence is Integrator complex subunit 14 (515 aa).

The VWFA domain occupies 2–204; the sequence is PTVVVMDVSL…KNVQSMFGKL (203 aa). Residues Ser-10, Ser-12, and Thr-86 each coordinate Mg(2+). Lys-418 bears the N6-acetyllysine mark.

It belongs to the Integrator subunit 14 family. As to quaternary structure, component of the Integrator complex, composed of core subunits INTS1, INTS2, INTS3, INTS4, INTS5, INTS6, INTS7, INTS8, INTS9/RC74, INTS10, INTS11/CPSF3L, INTS12, INTS13, INTS14 and INTS15. The core complex associates with protein phosphatase 2A subunits PPP2CA and PPP2R1A, to form the Integrator-PP2A (INTAC) complex. INTS14 is part of the tail subcomplex, composed of INTS10, INTS13, INTS14 and INTS15.

It localises to the nucleus. In terms of biological role, component of the integrator complex, a multiprotein complex that terminates RNA polymerase II (Pol II) transcription in the promoter-proximal region of genes. The integrator complex provides a quality checkpoint during transcription elongation by driving premature transcription termination of transcripts that are unfavorably configured for transcriptional elongation: the complex terminates transcription by (1) catalyzing dephosphorylation of the C-terminal domain (CTD) of Pol II subunit POLR2A/RPB1 and SUPT5H/SPT5, (2) degrading the exiting nascent RNA transcript via endonuclease activity and (3) promoting the release of Pol II from bound DNA. The integrator complex is also involved in terminating the synthesis of non-coding Pol II transcripts, such as enhancer RNAs (eRNAs), small nuclear RNAs (snRNAs), telomerase RNAs and long non-coding RNAs (lncRNAs). Within the integrator complex, INTS14 is part of the integrator tail module that acts as a platform for the recruitment of transcription factors at promoters. The polypeptide is Integrator complex subunit 14 (Rattus norvegicus (Rat)).